Reading from the N-terminus, the 645-residue chain is Macrolide export ATP-binding/permease protein MacB (645 aa).

Residues 6–244 (IELEGIRRSY…SSIAVVPWQA (239 aa)) form the ABC transporter domain. 42–49 (GASGSGKS) contacts ATP. 4 helical membrane passes run 274-294 (ALTL…MAIG), 526-546 (IAAI…LITV), 574-594 (AVVL…VIGV), and 596-616 (AALL…GALM).

Belongs to the ABC transporter superfamily. Macrolide exporter (TC 3.A.1.122) family. Homodimer.

The protein localises to the cell inner membrane. In terms of biological role, non-canonical ABC transporter that contains transmembrane domains (TMD), which form a pore in the inner membrane, and an ATP-binding domain (NBD), which is responsible for energy generation. Confers resistance against macrolides. In Nitrobacter winogradskyi (strain ATCC 25391 / DSM 10237 / CIP 104748 / NCIMB 11846 / Nb-255), this protein is Macrolide export ATP-binding/permease protein MacB.